We begin with the raw amino-acid sequence, 405 residues long: CRS2-associated factor 1, mitochondrial (405 aa).

Residues 1-20 (MFLIRLSRHNPSSFTLLTRR) constitute a mitochondrion transit peptide. A disordered region spans residues 32 to 75 (RDLYNFQSPPPLSSSASENPDFNQKNNNKKKPKPQYRPPSSLEG). CRM domains are found at residues 157–255 (ASLT…KRPK) and 277–373 (DGLS…KEDD). Residues 384–405 (SIDSDVDLSCSRGAQDSPDETT) form a disordered region.

In terms of assembly, part of large ribonucleo-protein complexes that include group IIB introns.

It is found in the mitochondrion. In terms of biological role, may be involved in the splicing of group IIB introns in mitochondria. This chain is CRS2-associated factor 1, mitochondrial, found in Arabidopsis thaliana (Mouse-ear cress).